Consider the following 208-residue polypeptide: Thymidylate kinase (208 aa).

11–18 provides a ligand contact to ATP; the sequence is GGEGAGKS.

Belongs to the thymidylate kinase family.

It catalyses the reaction dTMP + ATP = dTDP + ADP. Its function is as follows. Phosphorylation of dTMP to form dTDP in both de novo and salvage pathways of dTTP synthesis. The polypeptide is Thymidylate kinase (tmk) (Caulobacter vibrioides (strain ATCC 19089 / CIP 103742 / CB 15) (Caulobacter crescentus)).